Consider the following 172-residue polypeptide: MTYFVLFLGLCFVLGGLAVASNPSPYYGVVGLVLASVAGCAWLLSLGVSFVSLVLFMVYLGGMLVVFVYSVSLAADPFPEAWGDWRVVGYGMGFVAVLVMGMVVGGFECWDLGVVTVDSVGMFSVRLDFGGVAMFYSCGVGMFLVAGWGLLLTLFVVLELVRGLTRGAIRAV.

A run of 5 helical transmembrane segments spans residues M1–S21, Y27–G47, V48–V68, V87–F107, and C138–L158.

Belongs to the complex I subunit 6 family.

It localises to the mitochondrion membrane. It catalyses the reaction a ubiquinone + NADH + 5 H(+)(in) = a ubiquinol + NAD(+) + 4 H(+)(out). Its function is as follows. Core subunit of the mitochondrial membrane respiratory chain NADH dehydrogenase (Complex I) that is believed to belong to the minimal assembly required for catalysis. Complex I functions in the transfer of electrons from NADH to the respiratory chain. The immediate electron acceptor for the enzyme is believed to be ubiquinone. The polypeptide is NADH-ubiquinone oxidoreductase chain 6 (MT-ND6) (Uria lomvia (Thick-billed murre)).